Consider the following 515-residue polypeptide: Heavy metal-associated isoprenylated plant protein 41 (515 aa).

Residues 376–444 (KQRIVLKMDM…KVCMTTIITV (69 aa)) enclose the HMA domain. Cysteine 512 is subject to Cysteine methyl ester. Cysteine 512 is lipidated: S-farnesyl cysteine. A propeptide spans 513-515 (RIL) (removed in mature form).

It belongs to the HIPP family.

Functionally, heavy-metal-binding protein. The chain is Heavy metal-associated isoprenylated plant protein 41 from Arabidopsis thaliana (Mouse-ear cress).